The chain runs to 227 residues: Cytochrome c oxidase subunit 2 (227 aa).

The Mitochondrial intermembrane portion of the chain corresponds to 1–14 (MAYPFQLGLQDATS). The chain crosses the membrane as a helical span at residues 15–45 (PIMEELTNFHDHTLMIVFLISTLVLYIISLM). The Mitochondrial matrix portion of the chain corresponds to 46 to 59 (LTTKLTHTSTMDAQ). The chain crosses the membrane as a helical span at residues 60 to 87 (EVETIWTILPAVILILIALPSLRILYMM). Residues 88 to 227 (DEINNPVLTV…YFENWSASMI (140 aa)) lie on the Mitochondrial intermembrane side of the membrane. Residues histidine 161, cysteine 196, glutamate 198, cysteine 200, histidine 204, and methionine 207 each contribute to the Cu cation site. Glutamate 198 is a Mg(2+) binding site. Tyrosine 218 carries the phosphotyrosine modification.

The protein belongs to the cytochrome c oxidase subunit 2 family. As to quaternary structure, component of the cytochrome c oxidase (complex IV, CIV), a multisubunit enzyme composed of 14 subunits. The complex is composed of a catalytic core of 3 subunits MT-CO1, MT-CO2 and MT-CO3, encoded in the mitochondrial DNA, and 11 supernumerary subunits COX4I, COX5A, COX5B, COX6A, COX6B, COX6C, COX7A, COX7B, COX7C, COX8 and NDUFA4, which are encoded in the nuclear genome. The complex exists as a monomer or a dimer and forms supercomplexes (SCs) in the inner mitochondrial membrane with NADH-ubiquinone oxidoreductase (complex I, CI) and ubiquinol-cytochrome c oxidoreductase (cytochrome b-c1 complex, complex III, CIII), resulting in different assemblies (supercomplex SCI(1)III(2)IV(1) and megacomplex MCI(2)III(2)IV(2)). Found in a complex with TMEM177, COA6, COX18, COX20, SCO1 and SCO2. Interacts with TMEM177 in a COX20-dependent manner. Interacts with COX20. Interacts with COX16. Cu cation serves as cofactor.

Its subcellular location is the mitochondrion inner membrane. The enzyme catalyses 4 Fe(II)-[cytochrome c] + O2 + 8 H(+)(in) = 4 Fe(III)-[cytochrome c] + 2 H2O + 4 H(+)(out). Component of the cytochrome c oxidase, the last enzyme in the mitochondrial electron transport chain which drives oxidative phosphorylation. The respiratory chain contains 3 multisubunit complexes succinate dehydrogenase (complex II, CII), ubiquinol-cytochrome c oxidoreductase (cytochrome b-c1 complex, complex III, CIII) and cytochrome c oxidase (complex IV, CIV), that cooperate to transfer electrons derived from NADH and succinate to molecular oxygen, creating an electrochemical gradient over the inner membrane that drives transmembrane transport and the ATP synthase. Cytochrome c oxidase is the component of the respiratory chain that catalyzes the reduction of oxygen to water. Electrons originating from reduced cytochrome c in the intermembrane space (IMS) are transferred via the dinuclear copper A center (CU(A)) of subunit 2 and heme A of subunit 1 to the active site in subunit 1, a binuclear center (BNC) formed by heme A3 and copper B (CU(B)). The BNC reduces molecular oxygen to 2 water molecules using 4 electrons from cytochrome c in the IMS and 4 protons from the mitochondrial matrix. The polypeptide is Cytochrome c oxidase subunit 2 (MT-CO2) (Leopoldamys sabanus (Long-tailed giant rat)).